The following is a 102-amino-acid chain: Synaptobrevin-like protein 5 (102 aa).

One can recognise a v-SNARE coiled-coil homology domain in the interval 17-77; it reads KIMRTRRELD…VKIKREMSWK (61 aa).

The sequence is that of Synaptobrevin-like protein 5 (snb-5) from Caenorhabditis elegans.